We begin with the raw amino-acid sequence, 385 residues long: Multidrug resistance protein MdtE (385 aa).

The signal sequence occupies residues 1 to 20 (MNRRRKLLIPLLFCGAMLTA). C21 carries the N-palmitoyl cysteine lipid modification. A lipid anchor (S-diacylglycerol cysteine) is attached at C21.

The protein belongs to the membrane fusion protein (MFP) (TC 8.A.1) family. In terms of assembly, homotrimer. Part of the tripartite efflux system MdtEF-TolC, which is composed of an inner membrane transporter, MdtF, a membrane fusion protein, MdtE, and an outer membrane component, TolC. The complex forms a large protein conduit and can translocate molecules across both the inner and outer membranes.

It is found in the cell inner membrane. Its function is as follows. Part of the tripartite efflux system MdtEF-TolC, which confers resistance to various compounds. In Escherichia coli O157:H7, this protein is Multidrug resistance protein MdtE (mdtE).